Reading from the N-terminus, the 188-residue chain is dITP/XTP pyrophosphatase (188 aa).

Residue 7–12 (TGNIGK) coordinates substrate. Mg(2+)-binding residues include Glu-36 and Asp-65. Residue Asp-65 is the Proton acceptor of the active site. Substrate is bound by residues Ser-66, 141 to 144 (FGYD), Lys-164, and 169 to 170 (HR).

The protein belongs to the HAM1 NTPase family. As to quaternary structure, homodimer. It depends on Mg(2+) as a cofactor.

It carries out the reaction XTP + H2O = XMP + diphosphate + H(+). The enzyme catalyses dITP + H2O = dIMP + diphosphate + H(+). It catalyses the reaction ITP + H2O = IMP + diphosphate + H(+). Its function is as follows. Pyrophosphatase that catalyzes the hydrolysis of nucleoside triphosphates to their monophosphate derivatives, with a high preference for the non-canonical purine nucleotides XTP (xanthosine triphosphate), dITP (deoxyinosine triphosphate) and ITP. Seems to function as a house-cleaning enzyme that removes non-canonical purine nucleotides from the nucleotide pool, thus preventing their incorporation into DNA/RNA and avoiding chromosomal lesions. The polypeptide is dITP/XTP pyrophosphatase (Methanopyrus kandleri (strain AV19 / DSM 6324 / JCM 9639 / NBRC 100938)).